The following is a 689-amino-acid chain: Beta-adrenergic receptor kinase 1 (689 aa).

Positions methionine 1–aspartate 190 are N-terminal. The RGS domain occupies threonine 54–cysteine 175. One can recognise a Protein kinase domain in the interval phenylalanine 191–phenylalanine 453. ATP contacts are provided by residues isoleucine 197 to valine 205 and lysine 220. Aspartate 317 serves as the catalytic Proton acceptor. One can recognise an AGC-kinase C-terminal domain in the interval arginine 454–valine 521. A PH domain is found at aspartate 558 to arginine 652. Serine 670 bears the Phosphoserine mark.

It belongs to the protein kinase superfamily. AGC Ser/Thr protein kinase family. GPRK subfamily. In terms of assembly, interacts with the heterodimer formed by GNB1 and GNG2. Interacts with GIT1. Interacts with, and phosphorylates chemokine-stimulated CCR5. Interacts with ARRB1. Interacts with LPAR1 and LPAR2. Interacts with RALA in response to LPAR1 activation. ADRBK1 and RALA mutually inhibit each other's binding to LPAR1. Interacts with ADRB2.

The protein localises to the cytoplasm. It is found in the cell membrane. The protein resides in the postsynapse. It localises to the presynapse. The catalysed reaction is [beta-adrenergic receptor] + ATP = [beta-adrenergic receptor]-phosphate + ADP + H(+). With respect to regulation, in contrast to other AGC family kinases, the catalytic activity is solely regulated by the binding of substrates and ligands, not by phosphorylation of the kinase domain. Its function is as follows. Specifically phosphorylates the agonist-occupied form of the beta-adrenergic and closely related receptors, probably inducing a desensitization of them. Key regulator of LPAR1 signaling. Competes with RALA for binding to LPAR1 thus affecting the signaling properties of the receptor. Desensitizes LPAR1 and LPAR2 in a phosphorylation-independent manner. Positively regulates ciliary smoothened (SMO)-dependent Hedgehog (Hh) signaling pathway by facilitating the trafficking of SMO into the cilium and the stimulation of SMO activity. Inhibits relaxation of airway smooth muscle in response to blue light. The polypeptide is Beta-adrenergic receptor kinase 1 (Mesocricetus auratus (Golden hamster)).